The following is a 320-amino-acid chain: Major pollen allergen Pha a 5.1 (320 aa).

A signal peptide spans 1 to 23; that stretch reads MAVQKYTMALFLAVALVAGPAAP. Residues 21–45 are disordered; it reads AAPTPPTPRTPPLLPPPRARDKATL. The span at 22 to 37 shows a compositional bias: pro residues; that stretch reads APTPPTPRTPPLLPPP.

This sequence belongs to the Poa p IX/Phl p VI allergen family.

In Phalaris aquatica (Canary grass), this protein is Major pollen allergen Pha a 5.1.